A 2169-amino-acid polypeptide reads, in one-letter code: Voltage-dependent L-type calcium channel subunit alpha-1C (2169 aa).

Topologically, residues 1-153 (MVPLVQPTTP…RACISIVEWK (153 aa)) are cytoplasmic. Positions 76–97 (GAALSWQAAIDAGRQAKLMGSA) are calmodulin-binding. Over residues 98 to 108 (GNTTISTVSST) the composition is skewed to polar residues. A disordered region spans residues 98–127 (GNTTISTVSSTQRKRQQYGKPKKQSGTTAT). Basic residues predominate over residues 109–120 (QRKRQQYGKPKK). An I repeat occupies 140 to 437 (NPIRRACISI…LVLGVLSGEF (298 aa)). The helical transmembrane segment at 154–172 (PFEIIILLTIFANCVALAI) threads the bilayer. At 173 to 187 (YIPFPEDDSNATNSN) the chain is on the extracellular side. N-linked (GlcNAc...) asparagine glycosylation is present at Asn-182. The helical transmembrane segment at 188-208 (LERVEYLFLIIFTVEAFLKVI) threads the bilayer. Topologically, residues 209 to 217 (AYGLLFHPN) are cytoplasmic. The helical transmembrane segment at 218–238 (AYLRNGWNLLDFIIVVVGLFS) threads the bilayer. Residues 239–261 (AILEQATKADGANALGGKGAGFD) are Extracellular-facing. The chain crosses the membrane as a helical span at residues 262-280 (VKALRAFRVLRPLRLVSGV). At 281–297 (PSLQVVLNSIIKAMVPL) the chain is on the cytoplasmic side. A helical membrane pass occupies residues 298–319 (LHTALLVLFVIIIYAIIGLELF). The Extracellular portion of the chain corresponds to 320–379 (MGKMHKTCYNQEGITDVPAEEDPSPCALESGHGRQCQNGTVCKPGWDGPKHGITNFDNFA). Cys-345 and Cys-361 are oxidised to a cystine. N-linked (GlcNAc...) asparagine glycosylation is present at Asn-357. The segment at residues 380–401 (FAMLTVFQCITMEGWTDVLYWM) is an intramembrane region (pore-forming). Positions 390 to 393 (TMEG) match the Selectivity filter of repeat I motif. Residue Glu-392 participates in Ca(2+) binding. Topologically, residues 402–409 (QDAMGYEL) are extracellular. A helical membrane pass occupies residues 410–430 (PWVYFVSLVIFGSFFVLNLVL). At 431 to 553 (GVLSGEFSKE…RKCRAAVKSN (123 aa)) the chain is on the cytoplasmic side. The segment at 457–474 (QQLEEDLKGYLDWITQAE) is AID/alpha-interaction domain; mediates interaction with the beta subunit. Residues 478–510 (PENEDEGVDEEKPRNMSMPTSETESVNTENVAG) are disordered. The span at 494–507 (SMPTSETESVNTEN) shows a compositional bias: polar residues. At Ser-498 the chain carries Phosphoserine. At Thr-505 the chain carries Phosphothreonine. One copy of the II repeat lies at 539 to 785 (NRFCRRKCRA…VFLAIAVDNL (247 aa)). The helical transmembrane segment at 554-572 (VFYWLVIFLVFLNTLTIAS) threads the bilayer. Over 573-583 (EHYNQPHWLTE) the chain is Extracellular. A helical membrane pass occupies residues 584-604 (VQDTANKALLALFTAEMLLKM). Residues 605 to 615 (YSLGLQAYFVS) lie on the Cytoplasmic side of the membrane. Residues 616-635 (LFNRLDCFIVCGGILETILV) traverse the membrane as a helical segment. Residues 636-644 (ETKIMSPLG) are Extracellular-facing. A helical transmembrane segment spans residues 645–663 (ISVLRCVRLLRIFKITRYW). Residues 664-682 (NSLSNLVASLLNSVRSIAS) lie on the Cytoplasmic side of the membrane. The helical transmembrane segment at 683-702 (LLLLLFLFIIIFSLLGMQLF) threads the bilayer. Residues 703–722 (GGKFNFDEMRTRRSTFDNFP) are Extracellular-facing. The pore-forming intramembrane region spans 723–744 (QSLLTVFQILTGEDWNSVMYDG). A Selectivity filter of repeat II motif is present at residues 733–736 (TGED). Glu-735 is a Ca(2+) binding site. Over 745–754 (IMAYGGPSFP) the chain is Extracellular. Residues 755–774 (GMLVCIYFIILFICGNYILL) form a helical membrane-spanning segment. Over 775–929 (NVFLAIAVDN…LQCHRIVNDT (155 aa)) the chain is Cytoplasmic. Residues 793–890 (SAQKEEEEEK…EMPVGPRPRP (98 aa)) are disordered. Residues 812–835 (SPEKKQEVVEKPAVEETKEEKIEL) show a composition bias toward basic and acidic residues. Residues Ser-837 and Ser-844 each carry the phosphoserine modification. The interaction with STAC2 stretch occupies residues 858–905 (NENEDKSPYPNPDAAGEEDEEEPEMPVGPRPRPLSELHLKEKAVPMPE). Residues 872-881 (AGEEDEEEPE) show a composition bias toward acidic residues. The stretch at 916-1198 (NRFRLQCHRI…IFVGFVIVTF (283 aa)) is one III repeat. A helical transmembrane segment spans residues 930–948 (IFTNLILFFILLSSISLAA). The Extracellular portion of the chain corresponds to 949-960 (EDPVQHTSFRNH). A helical membrane pass occupies residues 961–980 (ILFYFDIVFTTIFTIEIALK). Residues 981 to 996 (MTAYGAFLHKGSFCRN) lie on the Cytoplasmic side of the membrane. A helical transmembrane segment spans residues 997 to 1015 (YFNILDLLVVSVSLISFGI). Residues 1016–1022 (QSSAINV) lie on the Extracellular side of the membrane. Residues 1023-1041 (VKILRVLRVLRPLRAINRA) traverse the membrane as a helical segment. The Cytoplasmic portion of the chain corresponds to 1042–1060 (KGLKHVVQCVFVAIRTIGN). Residues 1061–1080 (IVIVTTLLQFMFACIGVQLF) traverse the membrane as a helical segment. The Extracellular segment spans residues 1081-1130 (KGKLYTCSDSSKQTEAECKGNYITYKDGEVDQPIIQPRSWENSKFDFDNV). Cysteines 1087 and 1098 form a disulfide. The interval 1118 to 1207 (RSWENSKFDF…FQEQGEQEYK (90 aa)) is dihydropyridine binding. An intramembrane region (pore-forming) is located at residues 1131-1151 (LAAMMALFTVSTFEGWPELLY). Residues 1142–1145 (TFEG) carry the Selectivity filter of repeat III motif. A Ca(2+)-binding site is contributed by Glu-1144. At 1152-1168 (RSIDSHTEDKGPIYNYR) the chain is on the extracellular side. A helical membrane pass occupies residues 1169–1190 (VEISIFFIIYIIIIAFFMMNIF). The Cytoplasmic segment spans residues 1191–1248 (VGFVIVTFQEQGEQEYKNCELDKNQRQCVEYALKARPLRRYIPKNQHQYKVWYVVNST). The IV repeat unit spans residues 1235-1508 (NQHQYKVWYV…LFVAVVMDNF (274 aa)). Residues 1249-1270 (YFEYLMFVLILLNTICLAMQHY) traverse the membrane as a helical segment. Over 1271–1278 (GQSCLFKI) the chain is Extracellular. Residues 1279 to 1300 (AMNILNMLFTGLFTVEMILKLI) traverse the membrane as a helical segment. The Cytoplasmic segment spans residues 1301–1310 (AFKPKHYFCD). Residues 1311–1330 (AWNTFDALIVVGSIVDIAIT) form a helical membrane-spanning segment. Residues 1331-1353 (EVNPAEHTQCSPSMNAEENSRIS) are Extracellular-facing. Residues 1354–1372 (ITFFRLFRVMRLVKLLSRG) form a helical membrane-spanning segment. The Cytoplasmic portion of the chain corresponds to 1373–1390 (EGIRTLLWTFIKSFQALP). A helical membrane pass occupies residues 1391-1411 (YVALLIVMLFFIYAVIGMQVF). Over 1412 to 1433 (GKIALNDTTEINRNNNFQTFPQ) the chain is Extracellular. Asn-1417 is a glycosylation site (N-linked (GlcNAc...) asparagine). Positions 1434–1452 (AVLLLFRCATGEAWQDIML) form an intramembrane region, pore-forming. The short motif at 1443–1446 (TGEA) is the Selectivity filter of repeat IV element. The Extracellular segment spans residues 1453 to 1480 (ACMPGKKCAPESDPSNSTEGETPCGSSF). The segment at 1459 to 1527 (KCAPESDPSN…LGPHHLDEFK (69 aa)) is dihydropyridine binding. A disulfide bridge links Cys-1460 with Cys-1476. N-linked (GlcNAc...) asparagine glycosylation occurs at Asn-1468. Residues 1473–1515 (ETPCGSSFAVFYFISFYMLCAFLIINLFVAVVMDNFDYLTRDW) form a phenylalkylamine binding region. A helical transmembrane segment spans residues 1481–1505 (AVFYFISFYMLCAFLIINLFVAVVM). At 1506–2169 (DNFDYLTRDW…ADSRVHVRSL (664 aa)) the chain is on the cytoplasmic side. The interval 1640 to 1667 (DEVTVGKFYATFLIQEYFRKFKKRKEQG) is important for interaction with STAC1, STAC2 and STAC3. The segment at 1646–1666 (KFYATFLIQEYFRKFKKRKEQ) is calmodulin-binding IQ region. Residues 1680 to 1699 (LQAGLRTLHDIGPEIRRAIS) form an important for localization in at the junctional membrane region. Ser-1699 and Ser-1720 each carry phosphoserine. 2 disordered regions span residues 1761 to 1793 (KAGN…TGSN) and 1894 to 1920 (ENRQ…LRSA). The span at 1780–1792 (STFTPSSYSSTGS) shows a compositional bias: polar residues. Residues 1894–1910 (ENRQLTPPEEDKGDTRP) show a composition bias toward basic and acidic residues. Ser-1927 bears the Phosphoserine mark.

The protein belongs to the calcium channel alpha-1 subunit (TC 1.A.1.11) family. CACNA1C subfamily. As to quaternary structure, component of a calcium channel complex consisting of a pore-forming alpha subunit (CACNA1C) and ancillary beta, gamma and delta subunits. The channel complex contains alpha, beta, gamma and delta subunits in a 1:1:1:1 ratio, i.e. it contains only one of each type of subunit. CACNA1C channel activity is modulated by ancillary subunits, such as CACNB1, CACNB2, CACNB3, CACNA2D1 and CACNA2D4. Interacts with CACNB1. Interacts with CACNB2. Identified in a complex with CACNA2D4 and CACNB3. Interacts with CACNB3. Interacts with CACNA2D1. Interacts with CACNA2D4. Interacts with the gamma subunits CACNG4, CACNG6, CACNG7 and CACNG8. Interacts with CALM1. Interacts (via the N-terminus and the C-terminal C and IQ motifs) with CABP1; this inhibits Ca(2+)-dependent channel inactivation. The binding via the C motif is calcium independent whereas the binding via IQ requires the presence of calcium and is mutually exclusive with calmodulin binding. The binding to the cytoplasmic N-terminal domain is calcium independent but is essential for the channel modulation. Interacts (via C-terminal CDB motif) with CABP5; in a calcium-dependent manner. Interacts with CIB1; the interaction increases upon cardiomyocytes hypertrophy. Interacts with STAC2 and STAC3; this inhibits channel inactivation. Post-translationally, phosphorylation by PKA at Ser-1927 activates the channel. Elevated levels of blood glucose lead to increased phosphorylation by PKA. In terms of tissue distribution, expressed in heart. Expressed in uterus.

The protein resides in the cell membrane. The protein localises to the sarcolemma. It localises to the perikaryon. Its subcellular location is the postsynaptic density membrane. It is found in the cell projection. The protein resides in the dendrite. The protein localises to the T-tubule. The enzyme catalyses Ca(2+)(in) = Ca(2+)(out). Inhibited by dihydropyridines (DHP), such as isradipine. Inhibited by nifedipine. Channel activity is regulated by Ca(2+) and calmodulin. Binding of STAC1, STAC2 or STAC3 to a region that overlaps with the calmodulin binding site inhibits channel inactivation by Ca(2+) and calmodulin. Binding of calmodulin or CABP1 at the same regulatory sites results in opposite effects on the channel function. Shear stress and pressure increases calcium channel activity. In terms of biological role, pore-forming, alpha-1C subunit of the voltage-gated calcium channel that gives rise to L-type calcium currents. Mediates influx of calcium ions into the cytoplasm, and thereby triggers calcium release from the sarcoplasm. Plays an important role in excitation-contraction coupling in the heart. Required for normal heart development and normal regulation of heart rhythm. Required for normal contraction of smooth muscle cells in blood vessels and in the intestine. Essential for normal blood pressure regulation via its role in the contraction of arterial smooth muscle cells. Long-lasting (L-type) calcium channels belong to the 'high-voltage activated' (HVA) group. This Cavia porcellus (Guinea pig) protein is Voltage-dependent L-type calcium channel subunit alpha-1C (CACNA1C).